A 324-amino-acid chain; its full sequence is Casein kinase I (324 aa).

Residues 9–278 (YALGKKLGSG…LRRLLKDLFI (270 aa)) enclose the Protein kinase domain. Residues 15-23 (LGSGSFGDI) and lysine 38 each bind ATP. Residue aspartate 128 is the Proton acceptor of the active site.

The protein belongs to the protein kinase superfamily. CK1 Ser/Thr protein kinase family. Casein kinase I subfamily. In terms of assembly, interacts with rhoptry protein RON3; the interaction is direct. Interacts with CK2alpha; the interaction is direct. Interacts with nucleosome assembly protein NAPL. Interacts with RAB5b. Interacts with host GAPVD1. Interacts with host SNX22. Mg(2+) serves as cofactor.

Its subcellular location is the cytoplasm. The protein resides in the cytoplasmic vesicle. It localises to the secretory vesicle. It is found in the microneme. The protein localises to the secreted. Its subcellular location is the host cell surface. The catalysed reaction is L-seryl-[protein] + ATP = O-phospho-L-seryl-[protein] + ADP + H(+). It carries out the reaction L-threonyl-[protein] + ATP = O-phospho-L-threonyl-[protein] + ADP + H(+). In terms of biological role, serine/threonine-protein kinase likely to be involved in many cellular processes. Phosphorylates rhoptry protein RON3, nucleosome assembly protein NAPL and DNA/RNA-binding protein ALBA4 in vitro. This is Casein kinase I from Plasmodium falciparum (isolate Dd2).